A 453-amino-acid polypeptide reads, in one-letter code: MISQFFILSSKGDPLIYKDFRGDSGGRDVAELFYRKLTGLPGDESPVVMHHHGRHFIHIRHSGLYLVVTTSENVSPFSLLELLSRLATLLGDYCGSLGEGTISRNVALVYELLDEVLDYGYVQTTSTEMLRNFIQTEAVVSKPFSLFDLSSVGLFGAETQQSKVAPSSAASRPVLSSRSDQSQKNEVFLDVVERLSVLIASNGSLLKVDVQGEIRLKSFLPSGSEMRIGLTEEFCVGKSELRGYGPGIRVDEVSFHSSVNLDEFESHRILRLQPPQGELTVMRYQLSDDLPSPLPFRLFPSVQWDRGSGRLQVYLKLRCDLLSKSQALNVRLHLPLPRGVVSLSQELSSPEQKAELAEGALRWDLPRVQGGSQLSGLFQMDVPGPPGPPSHGLSTSASPLGLGPASLSFELPRHTCSGLQVRFLRLAFRPCGNANPHKWVRHLSHSDAYVIRI.

The MHD domain maps to 184-452 (KNEVFLDVVE…LSHSDAYVIR (269 aa)).

It belongs to the adaptor complexes medium subunit family. In terms of assembly, adaptor protein complex 4 (AP-4) is a heterotetramer composed of two large adaptins (epsilon-type subunit AP4E1 and beta-type subunit AP4B1), a medium adaptin (mu-type subunit AP4M1) and a small adaptin (sigma-type AP4S1). Interacts with tyrosine-based sorting signals on the cytoplasmic tail of cargo proteins such as APP, ATG9A, LAMP2 and NAGPA. Interacts with the C-terminal domain of GRID2. Interacts with GRIA1 and GRIA2; the interaction is indirect via CACNG3. Interacts with CACNG3; CACNG3 associates GRIA1 and GRIA2 with the adaptor protein complex 4 (AP-4) to target them to the somatodendritic compartment of neurons. Interacts with HOOK1 and HOOK2; the interactions are direct, mediate the interaction between FTS-Hook-FHIP (FHF) complex and AP-4 and the perinuclear distribution of AP-4. In terms of tissue distribution, ubiquitous. Highly expressed in testis and lowly expressed in brain and lung.

The protein resides in the golgi apparatus. It is found in the trans-Golgi network membrane. Its subcellular location is the early endosome. Its function is as follows. Component of the adaptor protein complex 4 (AP-4). Adaptor protein complexes are vesicle coat components involved both in vesicle formation and cargo selection. They control the vesicular transport of proteins in different trafficking pathways. AP-4 forms a non clathrin-associated coat on vesicles departing the trans-Golgi network (TGN) and may be involved in the targeting of proteins from the trans-Golgi network (TGN) to the endosomal-lysosomal system. It is also involved in protein sorting to the basolateral membrane in epithelial cells and the proper asymmetric localization of somatodendritic proteins in neurons. Within AP-4, the mu-type subunit AP4M1 is directly involved in the recognition and binding of tyrosine-based sorting signals found in the cytoplasmic part of cargos. The adaptor protein complex 4 (AP-4) may also recognize other types of sorting signal. This is AP-4 complex subunit mu-1 from Homo sapiens (Human).